A 359-amino-acid chain; its full sequence is UDP-N-acetylglucosamine--N-acetylmuramyl-(pentapeptide) pyrophosphoryl-undecaprenol N-acetylglucosamine transferase (359 aa).

UDP-N-acetyl-alpha-D-glucosamine is bound by residues 15–17 (TGG), Asn-127, Arg-166, Ser-191, Ile-245, 264–269 (ALTVSE), and Gln-290.

Belongs to the glycosyltransferase 28 family. MurG subfamily.

The protein localises to the cell inner membrane. It carries out the reaction di-trans,octa-cis-undecaprenyl diphospho-N-acetyl-alpha-D-muramoyl-L-alanyl-D-glutamyl-meso-2,6-diaminopimeloyl-D-alanyl-D-alanine + UDP-N-acetyl-alpha-D-glucosamine = di-trans,octa-cis-undecaprenyl diphospho-[N-acetyl-alpha-D-glucosaminyl-(1-&gt;4)]-N-acetyl-alpha-D-muramoyl-L-alanyl-D-glutamyl-meso-2,6-diaminopimeloyl-D-alanyl-D-alanine + UDP + H(+). Its pathway is cell wall biogenesis; peptidoglycan biosynthesis. Its function is as follows. Cell wall formation. Catalyzes the transfer of a GlcNAc subunit on undecaprenyl-pyrophosphoryl-MurNAc-pentapeptide (lipid intermediate I) to form undecaprenyl-pyrophosphoryl-MurNAc-(pentapeptide)GlcNAc (lipid intermediate II). In Pseudomonas entomophila (strain L48), this protein is UDP-N-acetylglucosamine--N-acetylmuramyl-(pentapeptide) pyrophosphoryl-undecaprenol N-acetylglucosamine transferase.